The primary structure comprises 112 residues: Inner membrane assembly complex subunit 17 (112 aa).

A mitochondrion-targeting transit peptide spans 1 to 24 (MLRKLPINFAKWTVKKVPVQQKRF). The Mitochondrial matrix segment spans residues 25 to 44 (NSQQKEISPHIMFYKNYARP). The chain crosses the membrane as a helical span at residues 45–62 (LGKVTLFALATYYGLEIV). The Mitochondrial intermembrane segment spans residues 63 to 112 (WWKLDASEQEAIKNSKLLICESSFSLLTFRRITEFRECEIKTRDLYDPEI).

Belongs to the INA17 family. As to quaternary structure, component of the inner membrane assembly (INA) complex. Interacts with a subset of F(1)F(0)-ATP synthase subunits of the F(1)-domain and the peripheral stalk.

It is found in the mitochondrion inner membrane. Functionally, component of the INA complex (INAC) that promotes the biogenesis of mitochondrial F(1)F(0)-ATP synthase. INAC facilitates the assembly of the peripheral stalk and promotes the assembly of the catalytic F(1)-domain with the membrane-embedded F(0)-domain. This is Inner membrane assembly complex subunit 17 from Schizosaccharomyces pombe (strain 972 / ATCC 24843) (Fission yeast).